The sequence spans 151 residues: MSTPDNRSVNFFSLFRRGQHYAKTWPMEKRLAPVFVENRVIRMTRYAIRFMPPVAVFTLCWQIALGGQLGPAVATALFALSLPMQGLWWLGKRSVTPLPPSILNWFYEVRGKLQEAGQALAPVEGKPDYQALADTLKRAFKQLDKTFLDDL.

The next 2 helical transmembrane spans lie at 46–65 (YAIR…QIAL) and 69–91 (LGPA…WWLG).

Belongs to the UPF0208 family.

The protein localises to the cell inner membrane. This Salmonella choleraesuis (strain SC-B67) protein is UPF0208 membrane protein YfbV.